The primary structure comprises 259 residues: Leucine-rich repeat-containing protein 61 (259 aa).

3 LRR repeats span residues 54–75 (NLEW…ASLR), 76–97 (QLAV…AACE), and 98–119 (NLQS…QCLA). An LRRCT domain is found at 138–178 (NPLCANASYWAVVRELLPGLKVIDGERVSGRGSELYQLCRD).

The chain is Leucine-rich repeat-containing protein 61 (Lrrc61) from Mus musculus (Mouse).